A 429-amino-acid chain; its full sequence is Enolase (429 aa).

Gln167 contacts (2R)-2-phosphoglycerate. The Proton donor role is filled by Glu209. Asp246, Glu289, and Asp316 together coordinate Mg(2+). Residues Lys341, Arg370, Ser371, and Lys392 each contribute to the (2R)-2-phosphoglycerate site. Residue Lys341 is the Proton acceptor of the active site.

Belongs to the enolase family. As to quaternary structure, component of the RNA degradosome, a multiprotein complex involved in RNA processing and mRNA degradation. Requires Mg(2+) as cofactor.

It is found in the cytoplasm. The protein localises to the secreted. The protein resides in the cell surface. The enzyme catalyses (2R)-2-phosphoglycerate = phosphoenolpyruvate + H2O. It participates in carbohydrate degradation; glycolysis; pyruvate from D-glyceraldehyde 3-phosphate: step 4/5. Catalyzes the reversible conversion of 2-phosphoglycerate (2-PG) into phosphoenolpyruvate (PEP). It is essential for the degradation of carbohydrates via glycolysis. The protein is Enolase of Pseudomonas entomophila (strain L48).